A 211-amino-acid chain; its full sequence is Pyridoxine/pyridoxamine 5'-phosphate oxidase (211 aa).

Substrate-binding positions include 8–11 (RNEY) and K66. FMN-binding positions include 61-66 (RVVLLK), 76-77 (FT), K83, and Q105. Substrate is bound by residues Y123, R127, and S131. FMN is bound by residues 140–141 (QS) and W184. Residue 190–192 (RLH) participates in substrate binding. Position 194 (R194) interacts with FMN.

The protein belongs to the pyridoxamine 5'-phosphate oxidase family. As to quaternary structure, homodimer. Requires FMN as cofactor.

The enzyme catalyses pyridoxamine 5'-phosphate + O2 + H2O = pyridoxal 5'-phosphate + H2O2 + NH4(+). It carries out the reaction pyridoxine 5'-phosphate + O2 = pyridoxal 5'-phosphate + H2O2. It functions in the pathway cofactor metabolism; pyridoxal 5'-phosphate salvage; pyridoxal 5'-phosphate from pyridoxamine 5'-phosphate: step 1/1. Its pathway is cofactor metabolism; pyridoxal 5'-phosphate salvage; pyridoxal 5'-phosphate from pyridoxine 5'-phosphate: step 1/1. Its function is as follows. Catalyzes the oxidation of either pyridoxine 5'-phosphate (PNP) or pyridoxamine 5'-phosphate (PMP) into pyridoxal 5'-phosphate (PLP). The polypeptide is Pyridoxine/pyridoxamine 5'-phosphate oxidase (Mannheimia succiniciproducens (strain KCTC 0769BP / MBEL55E)).